The primary structure comprises 183 residues: Phosphopantetheine adenylyltransferase (183 aa).

Ser-8 serves as a coordination point for substrate. ATP is bound by residues 8–9 and His-16; that span reads SF. Substrate-binding residues include Lys-40, Thr-72, and Arg-86. ATP is bound by residues 87 to 89, Glu-97, and 122 to 128; these read GLR and YSFLSSS.

This sequence belongs to the bacterial CoaD family. In terms of assembly, homohexamer. Requires Mg(2+) as cofactor.

It localises to the cytoplasm. It catalyses the reaction (R)-4'-phosphopantetheine + ATP + H(+) = 3'-dephospho-CoA + diphosphate. It functions in the pathway cofactor biosynthesis; coenzyme A biosynthesis; CoA from (R)-pantothenate: step 4/5. Its function is as follows. Reversibly transfers an adenylyl group from ATP to 4'-phosphopantetheine, yielding dephospho-CoA (dPCoA) and pyrophosphate. The polypeptide is Phosphopantetheine adenylyltransferase (Nostoc punctiforme (strain ATCC 29133 / PCC 73102)).